A 53-amino-acid polypeptide reads, in one-letter code: uncharacterized protein (53 aa).

The tract at residues R34–R53 is disordered.

This is an uncharacterized protein from Treponema pallidum (strain Nichols).